The primary structure comprises 352 residues: Glycerol-1-phosphate dehydrogenase [NAD(P)+] (352 aa).

NAD(+) contacts are provided by residues 98 to 102 (GKAID) and 120 to 123 (TAAS). Position 125 (aspartate 125) interacts with substrate. Position 129 (serine 129) interacts with NAD(+). Aspartate 172 contributes to the substrate binding site. Zn(2+) contacts are provided by aspartate 172 and histidine 252. Position 256 (histidine 256) interacts with substrate. Histidine 268 lines the Zn(2+) pocket.

This sequence belongs to the glycerol-1-phosphate dehydrogenase family. The cofactor is Zn(2+).

The protein resides in the cytoplasm. It catalyses the reaction sn-glycerol 1-phosphate + NAD(+) = dihydroxyacetone phosphate + NADH + H(+). The catalysed reaction is sn-glycerol 1-phosphate + NADP(+) = dihydroxyacetone phosphate + NADPH + H(+). It functions in the pathway membrane lipid metabolism; glycerophospholipid metabolism. Catalyzes the NAD(P)H-dependent reduction of dihydroxyacetonephosphate (DHAP or glycerone phosphate) to glycerol 1-phosphate (G1P). The G1P thus generated is used as the glycerophosphate backbone of phospholipids in the cellular membranes of Archaea. The protein is Glycerol-1-phosphate dehydrogenase [NAD(P)+] of Halobacterium salinarum (strain ATCC 29341 / DSM 671 / R1).